We begin with the raw amino-acid sequence, 820 residues long: Protein bicaudal D homolog 2 (820 aa).

Residue serine 2 is modified to N-acetylserine. The stretch at 20 to 270 (EWLRAEVKRL…LSHYMSINDS (251 aa)) forms a coiled coil. The interval 25-400 (EVKRLSHELA…RLTENLSALR (376 aa)) is interaction with DYNLL1, DYNC1H1, DYNC1I2, DCTN1 and DCTN2. 3 positions are modified to phosphoserine: serine 190, serine 224, and serine 320. The segment at 313–332 (SSLDNKTSTPRKDGLAPPSP) is disordered. Threonine 321 is subject to Phosphothreonine. The segment at 336–595 (SDLLSELHIS…LLATEVGRAD (260 aa)) is interaction with KIF5A. Positions 340–539 (SELHISEIQK…VTFSEELANL (200 aa)) form a coiled coil. 2 positions are modified to phosphoserine: serine 345 and serine 397. Disordered stretches follow at residues 400–427 (RRLQAGKERQTSLDNEKDRDSHEDGDYY), 563–582 (QGKAGRTSPEGRGRRSPVLL), 591–618 (VGRADGGTGDNSPSPSSSLPSPLSDPRR), and 799–820 (HEQTRRGRSKAASKAKPASPSL). Positions 404-424 (AGKERQTSLDNEKDRDSHEDG) are enriched in basic and acidic residues. Phosphoserine occurs at positions 570 and 578. Residues 586-820 (LLATEVGRAD…SKAKPASPSL (235 aa)) form an interaction with RANBP2 region. Threonine 598 bears the Phosphothreonine mark. A compositionally biased stretch (low complexity) spans 602–614 (SPSPSSSLPSPLS). Positions 662-804 (DKDKEALMEE…LELDHEQTRR (143 aa)) form a coiled coil. The segment at 662–810 (DKDKEALMEE…QTRRGRSKAA (149 aa)) is interaction with RAB6A. Phosphoserine is present on serine 819.

This sequence belongs to the BicD family. Part of a tripartite complex with dynein and dynactin, acts an adapter linking the dynein motor complex and dynactin. Interacts with CPNE4 (via VWFA domain). Interacts with NEK9. Interacts with DCTN2. Interacts with RAB6A. Interacts with DNAI1. Interacts with DYNLL1, DYNC1H1, DYNC1I2 and DCTN1. Forms a complex with dynein and dynactin. The dynein-dynactin-BICD2 ternary complex (DDB) binds preferentially to tyrosinated microtubules than to detyrosinated microtubules. Interacts with RANBP2, RAB6A and KIF5A. Interacts with KIF1C. Post-translationally, phosphorylated by NEK9 in vitro. Ubiquitously expressed with high expression in the spinal cord.

It localises to the golgi apparatus. The protein localises to the cytoplasm. Its subcellular location is the cytoskeleton. It is found in the nucleus. The protein resides in the nuclear pore complex. It localises to the nucleus envelope. In terms of biological role, acts as an adapter protein linking the dynein motor complex to various cargos and converts dynein from a non-processive to a highly processive motor in the presence of dynactin. Facilitates and stabilizes the interaction between dynein and dynactin and activates dynein processivity (the ability to move along a microtubule for a long distance without falling off the track). Facilitates the binding of RAB6A to the Golgi by stabilizing its GTP-bound form. Regulates coat complex coatomer protein I (COPI)-independent Golgi-endoplasmic reticulum transport via its interaction with RAB6A and recruitment of the dynein-dynactin motor complex. Contributes to nuclear and centrosomal positioning prior to mitotic entry through regulation of both dynein and kinesin-1. During G2 phase of the cell cycle, associates with RANBP2 at the nuclear pores and recruits dynein and dynactin to the nuclear envelope to ensure proper positioning of the nucleus relative to centrosomes prior to the onset of mitosis. The chain is Protein bicaudal D homolog 2 (Bicd2) from Mus musculus (Mouse).